Reading from the N-terminus, the 232-residue chain is Ribonuclease 3 (232 aa).

The region spanning 5 to 134 (KKALLEQFDL…FLGALLLDKG (130 aa)) is the RNase III domain. Glu-47 serves as a coordination point for Mg(2+). Residue Asp-51 is part of the active site. The Mg(2+) site is built by Asp-120 and Glu-123. Residue Glu-123 is part of the active site. The DRBM domain maps to 160-229 (DYKTKLQELL…AKNAFEKESS (70 aa)). Residues 203–232 (KSGQGQGRSKKLAEQEAAKNAFEKESSSCF) are disordered. Positions 213–232 (KLAEQEAAKNAFEKESSSCF) are enriched in basic and acidic residues.

This sequence belongs to the ribonuclease III family. In terms of assembly, homodimer. Mg(2+) is required as a cofactor.

It is found in the cytoplasm. It catalyses the reaction Endonucleolytic cleavage to 5'-phosphomonoester.. Its function is as follows. Digests double-stranded RNA. Involved in the processing of primary rRNA transcript to yield the immediate precursors to the large and small rRNAs (23S and 16S). Processes some mRNAs, and tRNAs when they are encoded in the rRNA operon. Processes pre-crRNA and tracrRNA of type II CRISPR loci if present in the organism. The sequence is that of Ribonuclease 3 from Streptococcus sanguinis (strain SK36).